We begin with the raw amino-acid sequence, 651 residues long: MBT domain-containing protein 1 (651 aa).

The disordered stretch occupies residues 21-55 (SFGMFDGYDSCSEDTSSSSSSDESEEEVAPLPSSL). Residues 29-41 (DSCSEDTSSSSSS) are compositionally biased toward low complexity. The FCS-type zinc-finger motif lies at 68-103 (PDGKSGMATCEMCGMVGVRDAFYSKTKRFCSVSCSR). Zn(2+) contacts are provided by C77, C80, C97, and C101. 4 MBT repeats span residues 164–268 (FSWG…LVPP), 276–373 (TNWK…IGHR), 374–479 (FKRT…LTPP), and 487–583 (FKWF…LQPP). Disordered stretches follow at residues 581–610 (QPPA…YKGH) and 629–651 (TFLQ…KQEP). A compositionally biased stretch (low complexity) spans 586–596 (QSNKDSQSNIS). The segment covering 597–610 (KQKKKSKSQPYKGH) has biased composition (basic residues). The span at 632 to 643 (QGASDQESNGSG) shows a compositional bias: polar residues.

As to quaternary structure, monomer. Component of the NuA4 histone acetyltransferase complex.

Its subcellular location is the nucleus. It localises to the chromosome. Chromatin reader component of the NuA4 histone acetyltransferase complex, a multiprotein complex involved in transcriptional activation of select genes principally by acetylation of nucleosomal histones H4 and H2A. The NuA4 complex plays a direct role in repair of DNA double-strand breaks (DSBs) by promoting homologous recombination (HR). MBTD1 specifically recognizes and binds monomethylated and dimethylated 'Lys-20' on histone H4 (H4K20me1 and H4K20me2, respectively). In the NuA4 complex, MBTD1 promotes recruitment of the complex to H4K20me marks by competing with TP53BP1 for binding to H4K20me. Following recruitment to H4K20me at DNA breaks, the NuA4 complex catalyzes acetylation of 'Lys-15' on histone H2A (H2AK15), blocking the ubiquitination mark required for TP53BP1 localization at DNA breaks, thereby promoting homologous recombination (HR). This Xenopus tropicalis (Western clawed frog) protein is MBT domain-containing protein 1.